We begin with the raw amino-acid sequence, 306 residues long: Ornithine carbamoyltransferase (306 aa).

Carbamoyl phosphate-binding positions include 51–54 (STRT), glutamine 78, arginine 102, and 129–132 (HPCQ). L-ornithine is bound by residues asparagine 160, aspartate 223, and 227–228 (SM). Carbamoyl phosphate is bound by residues 263–264 (CL) and arginine 291.

It belongs to the aspartate/ornithine carbamoyltransferase superfamily. OTCase family.

It is found in the cytoplasm. It carries out the reaction carbamoyl phosphate + L-ornithine = L-citrulline + phosphate + H(+). It participates in amino-acid biosynthesis; L-arginine biosynthesis; L-arginine from L-ornithine and carbamoyl phosphate: step 1/3. Reversibly catalyzes the transfer of the carbamoyl group from carbamoyl phosphate (CP) to the N(epsilon) atom of ornithine (ORN) to produce L-citrulline. In Nostoc sp. (strain PCC 7120 / SAG 25.82 / UTEX 2576), this protein is Ornithine carbamoyltransferase.